We begin with the raw amino-acid sequence, 291 residues long: Nitrogenase iron protein 1 (291 aa).

ATP is bound at residue 10 to 17 (GKGGIGKS). Cys-98 serves as a coordination point for [4Fe-4S] cluster. Arg-101 carries the post-translational modification ADP-ribosylarginine; by dinitrogenase reductase ADP-ribosyltransferase. Cys-133 is a binding site for [4Fe-4S] cluster.

It belongs to the NifH/BchL/ChlL family. Homodimer. Requires [4Fe-4S] cluster as cofactor. Post-translationally, the reversible ADP-ribosylation of Arg-101 inactivates the nitrogenase reductase and regulates nitrogenase activity.

It catalyses the reaction N2 + 8 reduced [2Fe-2S]-[ferredoxin] + 16 ATP + 16 H2O = H2 + 8 oxidized [2Fe-2S]-[ferredoxin] + 2 NH4(+) + 16 ADP + 16 phosphate + 6 H(+). The key enzymatic reactions in nitrogen fixation are catalyzed by the nitrogenase complex, which has 2 components: the iron protein (component 2) and a component 1 which is either a molybdenum-iron protein, a vanadium-iron, or an iron-iron protein. This chain is Nitrogenase iron protein 1 (nifH1), found in Azotobacter chroococcum mcd 1.